The following is a 99-amino-acid chain: Cytochrome c oxidase subunit 4 isoform 1, mitochondrial (99 aa).

Over Ser-1–Asn-73 the chain is Mitochondrial matrix. N6-acetyllysine; alternate is present on Lys-4. N6-succinyllysine; alternate is present on Lys-4. Lys-28 is modified (N6-acetyllysine). Phosphoserine is present on residues Ser-31 and Ser-33. N6-acetyllysine; alternate is present on Lys-35. Lys-35 is subject to N6-succinyllysine; alternate. Lys-42 is modified (N6-acetyllysine). Residues Glu-74–Tyr-99 form a helical membrane-spanning segment.

This sequence belongs to the cytochrome c oxidase IV family. In terms of assembly, component of the cytochrome c oxidase (complex IV, CIV), a multisubunit enzyme composed of 14 subunits. The complex is composed of a catalytic core of 3 subunits MT-CO1, MT-CO2 and MT-CO3, encoded in the mitochondrial DNA, and 11 supernumerary subunits COX4I, COX5A, COX5B, COX6A, COX6B, COX6C, COX7A, COX7B, COX7C, COX8 and NDUFA4, which are encoded in the nuclear genome. The complex exists as a monomer or a dimer and forms supercomplexes (SCs) in the inner mitochondrial membrane with NADH-ubiquinone oxidoreductase (complex I, CI) and ubiquinol-cytochrome c oxidoreductase (cytochrome b-c1 complex, complex III, CIII), resulting in different assemblies (supercomplex SCI(1)III(2)IV(1) and megacomplex MCI(2)III(2)IV(2)). Interacts with PHB2; the interaction decreases in absence of SPHK2. Interacts with AFG1L. Interacts with ABCB7; this interaction allows the regulation of cellular iron homeostasis and cellular reactive oxygen species (ROS) levels in cardiomyocytes. Interacts with FLVCR2; this interaction occurs in the absence of heme and is disrupted upon heme binding. Interacts with IRGC.

Its subcellular location is the mitochondrion inner membrane. It participates in energy metabolism; oxidative phosphorylation. In terms of biological role, component of the cytochrome c oxidase, the last enzyme in the mitochondrial electron transport chain which drives oxidative phosphorylation. The respiratory chain contains 3 multisubunit complexes succinate dehydrogenase (complex II, CII), ubiquinol-cytochrome c oxidoreductase (cytochrome b-c1 complex, complex III, CIII) and cytochrome c oxidase (complex IV, CIV), that cooperate to transfer electrons derived from NADH and succinate to molecular oxygen, creating an electrochemical gradient over the inner membrane that drives transmembrane transport and the ATP synthase. Cytochrome c oxidase is the component of the respiratory chain that catalyzes the reduction of oxygen to water. Electrons originating from reduced cytochrome c in the intermembrane space (IMS) are transferred via the dinuclear copper A center (CU(A)) of subunit 2 and heme A of subunit 1 to the active site in subunit 1, a binuclear center (BNC) formed by heme A3 and copper B (CU(B)). The BNC reduces molecular oxygen to 2 water molecules using 4 electrons from cytochrome c in the IMS and 4 protons from the mitochondrial matrix. The protein is Cytochrome c oxidase subunit 4 isoform 1, mitochondrial (COX4I1) of Trachypithecus cristatus (Silvered leaf-monkey).